A 55-amino-acid chain; its full sequence is Large ribosomal subunit protein bL32 (55 aa).

A disordered region spans residues 1–27 (MAVQQNKPTRSKRGMRRSHDALTTATL).

The protein belongs to the bacterial ribosomal protein bL32 family.

In Yersinia enterocolitica serotype O:8 / biotype 1B (strain NCTC 13174 / 8081), this protein is Large ribosomal subunit protein bL32.